The sequence spans 619 residues: 2-succinyl-5-enolpyruvyl-6-hydroxy-3-cyclohexene-1-carboxylate synthase (619 aa).

A compositionally biased stretch (polar residues) spans 385–398 (SSAHQSLAATNSDS). The disordered stretch occupies residues 385-415 (SSAHQSLAATNSDSSTDDIIENTDEEGSNES). Residues 399-413 (STDDIIENTDEEGSN) show a composition bias toward acidic residues.

The protein belongs to the TPP enzyme family. MenD subfamily. Homodimer. It depends on Mg(2+) as a cofactor. Mn(2+) is required as a cofactor. The cofactor is thiamine diphosphate.

The catalysed reaction is isochorismate + 2-oxoglutarate + H(+) = 5-enolpyruvoyl-6-hydroxy-2-succinyl-cyclohex-3-ene-1-carboxylate + CO2. Its pathway is quinol/quinone metabolism; 1,4-dihydroxy-2-naphthoate biosynthesis; 1,4-dihydroxy-2-naphthoate from chorismate: step 2/7. It participates in quinol/quinone metabolism; menaquinone biosynthesis. In terms of biological role, catalyzes the thiamine diphosphate-dependent decarboxylation of 2-oxoglutarate and the subsequent addition of the resulting succinic semialdehyde-thiamine pyrophosphate anion to isochorismate to yield 2-succinyl-5-enolpyruvyl-6-hydroxy-3-cyclohexene-1-carboxylate (SEPHCHC). The polypeptide is 2-succinyl-5-enolpyruvyl-6-hydroxy-3-cyclohexene-1-carboxylate synthase (Haloquadratum walsbyi (strain DSM 16790 / HBSQ001)).